The following is a 56-amino-acid chain: Small ribosomal subunit protein uS14 (56 aa).

Residues C21, C24, C39, and C42 each coordinate Zn(2+).

It belongs to the universal ribosomal protein uS14 family. Component of the 40S small ribosomal subunit. It depends on Zn(2+) as a cofactor.

The protein localises to the cytoplasm. The protein resides in the cytosol. It localises to the rough endoplasmic reticulum. This is Small ribosomal subunit protein uS14 (RpS29) from Plutella xylostella (Diamondback moth).